The chain runs to 524 residues: Lysophospholipid acyltransferase LPCAT4 (524 aa).

Transmembrane regions (helical) follow at residues 40–62 (CLLG…FLLW) and 87–107 (TVCH…LGFL). The HXXXXD motif signature appears at 129 to 134 (HSTFFD). Asparagine 152 is a glycosylation site (N-linked (GlcNAc...) asparagine). Positions 489-524 (PPHTSRGTSQTPNASSPGNPTALANGTVQAPKQKGD) are disordered. Positions 493 to 518 (SRGTSQTPNASSPGNPTALANGTVQA) are enriched in polar residues.

Belongs to the 1-acyl-sn-glycerol-3-phosphate acyltransferase family. In terms of tissue distribution, widely expressed with predominant level in brain.

The protein resides in the endoplasmic reticulum membrane. It catalyses the reaction a 1-acyl-sn-glycero-3-phosphoethanolamine + an acyl-CoA = a 1,2-diacyl-sn-glycero-3-phosphoethanolamine + CoA. It carries out the reaction a 1-O-(1Z-alkenyl)-sn-glycero-3-phosphoethanolamine + an acyl-CoA = a 1-O-(1Z-alkenyl)-2-acyl-sn-glycero-3-phosphoethanolamine + CoA. The enzyme catalyses a 1-acyl-sn-glycero-3-phosphocholine + an acyl-CoA = a 1,2-diacyl-sn-glycero-3-phosphocholine + CoA. The catalysed reaction is a 1-O-alkyl-sn-glycero-3-phosphocholine + acetyl-CoA = a 1-O-alkyl-2-acetyl-sn-glycero-3-phosphocholine + CoA. It catalyses the reaction a 1-acyl-sn-glycero-3-phospho-L-serine + an acyl-CoA = a 1,2-diacyl-sn-glycero-3-phospho-L-serine + CoA. It carries out the reaction octanoyl-CoA + a 1-acyl-sn-glycero-3-phosphoethanolamine = 1-acyl-2-octanoyl-sn-glycero-3-phosphoethanolamine + CoA. The enzyme catalyses a 1-acyl-sn-glycero-3-phosphoethanolamine + hexadecanoyl-CoA = 1-acyl-2-hexadecanoyl-sn-glycero-3-phosphoethanolamine + CoA. The catalysed reaction is a 1-acyl-sn-glycero-3-phosphoethanolamine + octadecanoyl-CoA = 1-acyl-2-octadecanoyl-sn-glycero-3-phosphoethanolamine + CoA. It catalyses the reaction a 1-acyl-sn-glycero-3-phosphoethanolamine + (9Z)-octadecenoyl-CoA = 1-acyl-2-(9Z)-octadecenoyl-sn-glycero-3-phosphoethanolamine + CoA. It carries out the reaction a 1-acyl-sn-glycero-3-phosphoethanolamine + (5Z,8Z,11Z,14Z)-eicosatetraenoyl-CoA = 1-acyl-2-(5Z,8Z,11Z,14Z)-eicosatetraenoyl-sn-glycero-3-phosphoethanolamine + CoA. The enzyme catalyses a 1-O-(1Z-alkenyl)-sn-glycero-3-phosphoethanolamine + octanoyl-CoA = 1-O-(1Z)-alkenyl-2-octanoyl-sn-glycero-3-phosphoethanolamine + CoA. The catalysed reaction is a 1-O-(1Z-alkenyl)-sn-glycero-3-phosphoethanolamine + hexadecanoyl-CoA = 1-O-(1Z)-alkenyl-2-hexadecanoyl-sn-glycero-3-phosphoethanolamine + CoA. It catalyses the reaction a 1-O-(1Z-alkenyl)-sn-glycero-3-phosphoethanolamine + octadecanoyl-CoA = 1-O-(1Z)-alkenyl-2-octadecanoyl-sn-glycero-3-phosphoethanolamine + CoA. It carries out the reaction a 1-O-(1Z-alkenyl)-sn-glycero-3-phosphoethanolamine + (9Z)-octadecenoyl-CoA = 1-O-(1Z)-alkenyl-2-(9Z)-octadecenoyl-sn-glycero-3-phosphoethanolamine + CoA. The enzyme catalyses a 1-O-(1Z-alkenyl)-sn-glycero-3-phosphoethanolamine + (5Z,8Z,11Z,14Z)-eicosatetraenoyl-CoA = 1-O-(1Z)-alkenyl-2-(5Z,8Z,11Z,14Z)-eicosatetraenoyl-sn-glycero-3-phosphoethanolamine + CoA. The catalysed reaction is a 1-acyl-sn-glycero-3-phosphocholine + hexadecanoyl-CoA = 1-acyl-2-hexadecanoyl-sn-glycero-3-phosphocholine + CoA. It catalyses the reaction a 1-acyl-sn-glycero-3-phosphocholine + (9Z)-octadecenoyl-CoA = a 1-acyl-2-(9Z)-octadecenoyl-sn-glycero-3-phosphocholine + CoA. It carries out the reaction 1-O-hexadecyl-sn-glycero-3-phosphocholine + (9Z)-octadecenoyl-CoA = 1-O-hexadecyl-2-(9Z)-octadecenoyl-sn-glycero-3-phosphocholine + CoA. The enzyme catalyses 1-O-hexadecyl-sn-glycero-3-phosphocholine + (5Z,8Z,11Z,14Z)-eicosatetraenoyl-CoA = 1-O-hexadecyl-2-(5Z,8Z,11Z,14Z)-eicosatetraenoyl-sn-glycero-3-phosphocholine + CoA. The catalysed reaction is 1-hexadecanoyl-sn-glycero-3-phospho-L-serine + (9Z)-octadecenoyl-CoA = 1-hexadecanoyl-2-(9Z-octadecenoyl)-sn-glycero-3-phospho-L-serine + CoA. It catalyses the reaction 1-octadecanoyl-sn-glycero-3-phospho-(1'-sn-glycerol) + (9Z)-octadecenoyl-CoA = 1-octadecanoyl-2-(9Z-octadecenoyl)-sn-glycero-3-phospho-(1'-sn-glycerol) + CoA. It carries out the reaction 1-octadecanoyl-sn-glycero-3-phospho-(1'-sn-glycerol) + (5Z,8Z,11Z,14Z)-eicosatetraenoyl-CoA = 1-octadecanoyl-2-(5Z,8Z,11Z,14Z-eicosatetraenoyl)-sn-glycero-3-phospho-(1'-sn-glycerol) + CoA. It participates in lipid metabolism; phospholipid metabolism. In terms of biological role, displays acyl-CoA-dependent lysophospholipid acyltransferase activity with a subset of lysophospholipids as substrates; converts lysophosphatidylethanolamine to phosphatidylethanolamine, lysophosphatidylcholine to phosphatidycholine, 1-alkenyl-lysophatidylethanolamine to 1-alkenyl-phosphatidylethanolamine, lysophosphatidylglycerol and alkyl-lysophosphatidylcholine to phosphatidylglycerol and alkyl-phosphatidylcholine, respectively. In contrast, has no lysophosphatidylinositol, glycerol-3-phosphate, diacylglycerol or lysophosphatidic acid acyltransferase activity. Prefers long chain acyl-CoAs (C16, C18) as acyl donors. The protein is Lysophospholipid acyltransferase LPCAT4 (LPCAT4) of Homo sapiens (Human).